The following is a 327-amino-acid chain: Lipoyl synthase (327 aa).

Residues C74, C79, C85, C100, C104, C107, and S314 each contribute to the [4Fe-4S] cluster site. In terms of domain architecture, Radical SAM core spans 86–303 (FSGGTATFMI…AEEGERMGFK (218 aa)).

It belongs to the radical SAM superfamily. Lipoyl synthase family. It depends on [4Fe-4S] cluster as a cofactor.

It localises to the cytoplasm. The enzyme catalyses [[Fe-S] cluster scaffold protein carrying a second [4Fe-4S](2+) cluster] + N(6)-octanoyl-L-lysyl-[protein] + 2 oxidized [2Fe-2S]-[ferredoxin] + 2 S-adenosyl-L-methionine + 4 H(+) = [[Fe-S] cluster scaffold protein] + N(6)-[(R)-dihydrolipoyl]-L-lysyl-[protein] + 4 Fe(3+) + 2 hydrogen sulfide + 2 5'-deoxyadenosine + 2 L-methionine + 2 reduced [2Fe-2S]-[ferredoxin]. Its pathway is protein modification; protein lipoylation via endogenous pathway; protein N(6)-(lipoyl)lysine from octanoyl-[acyl-carrier-protein]: step 2/2. In terms of biological role, catalyzes the radical-mediated insertion of two sulfur atoms into the C-6 and C-8 positions of the octanoyl moiety bound to the lipoyl domains of lipoate-dependent enzymes, thereby converting the octanoylated domains into lipoylated derivatives. This is Lipoyl synthase from Pseudomonas paraeruginosa (strain DSM 24068 / PA7) (Pseudomonas aeruginosa (strain PA7)).